A 550-amino-acid chain; its full sequence is Phosphatidylinositol 4-kinase gamma 2 (550 aa).

Ubiquitin-like domains are found at residues 34–111 (SVLV…YDPL) and 112–190 (LVTV…VEDT). The segment at 228 to 247 (VDGLNKGSPPVRSAEGTGGT) is disordered. The PI3K/PI4K catalytic domain occupies 234-532 (GSPPVRSAEG…SVLPASSEAT (299 aa)). The segment at 240 to 246 (SAEGTGG) is G-loop. ATP contacts are provided by residues 241–247 (AEGTGGT), Lys-263, and 359–362 (QMFM). Positions 392-400 (ANADRHAGN) are catalytic loop. The interval 415-441 (PIDHGYCLPENFEDCTFEWLYWPQAKL) is activation loop. Position 417 (Asp-417) interacts with ATP.

This sequence belongs to the PI3/PI4-kinase family. Type II PI4K subfamily.

It localises to the membrane. The catalysed reaction is a 1,2-diacyl-sn-glycero-3-phospho-(1D-myo-inositol) + ATP = a 1,2-diacyl-sn-glycero-3-phospho-(1D-myo-inositol 4-phosphate) + ADP + H(+). Functionally, the phosphorylation of phosphatidylinositol (PI) to PI4P is the first committed step in the generation of phosphatidylinositol 4,5-bisphosphate (PIP2), a precursor of the second messenger inositol 1,4,5-trisphosphate (InsP3). This chain is Phosphatidylinositol 4-kinase gamma 2 (PI4KG2), found in Arabidopsis thaliana (Mouse-ear cress).